The sequence spans 161 residues: Ribonuclease P protein component 2 (161 aa).

The protein belongs to the eukaryotic/archaeal RNase P protein component 2 family. Consists of a catalytic RNA component and at least 4-5 protein subunits.

Its subcellular location is the cytoplasm. The enzyme catalyses Endonucleolytic cleavage of RNA, removing 5'-extranucleotides from tRNA precursor.. Part of ribonuclease P, a protein complex that generates mature tRNA molecules by cleaving their 5'-ends. The protein is Ribonuclease P protein component 2 of Natronomonas pharaonis (strain ATCC 35678 / DSM 2160 / CIP 103997 / JCM 8858 / NBRC 14720 / NCIMB 2260 / Gabara) (Halobacterium pharaonis).